The sequence spans 364 residues: Formimidoylglutamase (364 aa).

Mn(2+) contacts are provided by His133, Asp189, His191, Asp193, Asp286, and Asp288.

It belongs to the arginase family. Mn(2+) is required as a cofactor.

It catalyses the reaction N-formimidoyl-L-glutamate + H2O = formamide + L-glutamate. It participates in amino-acid degradation; L-histidine degradation into L-glutamate; L-glutamate from N-formimidoyl-L-glutamate (hydrolase route): step 1/1. Catalyzes the conversion of N-formimidoyl-L-glutamate to L-glutamate and formamide. The sequence is that of Formimidoylglutamase from Photobacterium profundum (strain SS9).